The following is a 179-amino-acid chain: GTP-dependent dephospho-CoA kinase (179 aa).

Asp55, Val57, Asp74, Lys76, and Glu128 together coordinate GTP.

The protein belongs to the GTP-dependent DPCK family.

The catalysed reaction is 3'-dephospho-CoA + GTP = GDP + CoA + H(+). It participates in cofactor biosynthesis; coenzyme A biosynthesis. Functionally, catalyzes the GTP-dependent phosphorylation of the 3'-hydroxyl group of dephosphocoenzyme A to form coenzyme A (CoA). This chain is GTP-dependent dephospho-CoA kinase, found in Saccharolobus islandicus (strain M.16.27) (Sulfolobus islandicus).